The chain runs to 139 residues: Holo-[acyl-carrier-protein] synthase (139 aa).

Mg(2+) contacts are provided by D8 and E61.

It belongs to the P-Pant transferase superfamily. AcpS family. It depends on Mg(2+) as a cofactor.

It is found in the cytoplasm. It carries out the reaction apo-[ACP] + CoA = holo-[ACP] + adenosine 3',5'-bisphosphate + H(+). Transfers the 4'-phosphopantetheine moiety from coenzyme A to a Ser of acyl-carrier-protein. The polypeptide is Holo-[acyl-carrier-protein] synthase (Bradyrhizobium diazoefficiens (strain JCM 10833 / BCRC 13528 / IAM 13628 / NBRC 14792 / USDA 110)).